The chain runs to 60 residues: Large ribosomal subunit protein eL37 (60 aa).

Positions 19, 22, 34, and 37 each coordinate Zn(2+). The C4-type zinc-finger motif lies at Cys-19 to Cys-37.

This sequence belongs to the eukaryotic ribosomal protein eL37 family. Requires Zn(2+) as cofactor.

Its function is as follows. Binds to the 23S rRNA. This chain is Large ribosomal subunit protein eL37, found in Methanosphaerula palustris (strain ATCC BAA-1556 / DSM 19958 / E1-9c).